Consider the following 322-residue polypeptide: Ribosomal RNA small subunit methyltransferase H (322 aa).

S-adenosyl-L-methionine is bound by residues 47–49, Asp-67, Phe-93, Asp-112, and Gln-119; that span reads GGH.

This sequence belongs to the methyltransferase superfamily. RsmH family.

It is found in the cytoplasm. The enzyme catalyses cytidine(1402) in 16S rRNA + S-adenosyl-L-methionine = N(4)-methylcytidine(1402) in 16S rRNA + S-adenosyl-L-homocysteine + H(+). In terms of biological role, specifically methylates the N4 position of cytidine in position 1402 (C1402) of 16S rRNA. The chain is Ribosomal RNA small subunit methyltransferase H from Stenotrophomonas maltophilia (strain K279a).